The chain runs to 367 residues: MTSRNYLLLTPGPLTTSRTVKEAMLFDSCTWDDDYNIGVVEQIRQQLTALATASEGYTSVLLQGSGSYAVEAVLGSALGPQDKVLIVSNGAYGARMVEMAGLMGIAHHAYDCGEVARPDVQAIDAILNADPTISHIAMVHSETTTGMLNPIDEVGALAQRYDKTYIVDAMSSFGGIPMDIAALHIDYLISSANKCIQGVPGFAFVIAREQKLAACKGHSRSLSLDLYAQWRCMEDNHGKWRFTSPTHTVLAFAQALKELAEEGGVAARHQRYQQNQRSLVAGMRALGFNTLLDDELHSPIITAFYSPEDPQYRFSEFYRRLKEQGFVIYPGKVSQSDCFRIGNIGEVYAADITALLTAIRTAMYWTK.

Position 194 is an N6-(pyridoxal phosphate)lysine (Lys194).

The protein belongs to the class-V pyridoxal-phosphate-dependent aminotransferase family. PhnW subfamily. As to quaternary structure, homodimer. Pyridoxal 5'-phosphate serves as cofactor.

It carries out the reaction (2-aminoethyl)phosphonate + pyruvate = phosphonoacetaldehyde + L-alanine. Functionally, involved in phosphonate degradation. The sequence is that of 2-aminoethylphosphonate--pyruvate transaminase from Salmonella choleraesuis (strain SC-B67).